We begin with the raw amino-acid sequence, 142 residues long: Protein CPn_0742/CP_0003/CPj0742/CpB0770 (142 aa).

The disordered stretch occupies residues 115–142 (LHPTKESKRPKQKLSSTKKNKKKNWIPL). A compositionally biased stretch (basic residues) spans 124–142 (PKQKLSSTKKNKKKNWIPL).

It belongs to the chlamydial CPn_0742/CT_635/TC_0003 family.

The polypeptide is Protein CPn_0742/CP_0003/CPj0742/CpB0770 (Chlamydia pneumoniae (Chlamydophila pneumoniae)).